The following is a 193-amino-acid chain: MTEYLLLLIGTVLVNNFVLVKFLGLCPFMGVSKKLESAIGMGLATTFVLTLASVCSYLVETYILSPLGIEYLRTMSFILVIAVVVQFTEMVVHKTSPTLYRVLGIFLPLITTNCAVLGVALLNVTENHNFVESIIYGFGAAVGFSLVLILFSAMRERIAAADVPLPFKGASIAMITAGLMSLAFMGFTGLVKL.

A run of 6 helical transmembrane segments spans residues 5–25 (LLLL…FLGL), 39–59 (IGMG…SYLV), 67–87 (LGIE…VVQF), 102–122 (VLGI…VALL), 134–154 (IIYG…FSAM), and 171–191 (SIAM…TGLV).

This sequence belongs to the NqrDE/RnfAE family. The complex is composed of six subunits: RnfA, RnfB, RnfC, RnfD, RnfE and RnfG.

Its subcellular location is the cell inner membrane. Its function is as follows. Part of a membrane-bound complex that couples electron transfer with translocation of ions across the membrane. In Aliivibrio fischeri (strain ATCC 700601 / ES114) (Vibrio fischeri), this protein is Ion-translocating oxidoreductase complex subunit A.